The following is a 363-amino-acid chain: MQNNLISHINLRNFRNYEYQSISFTDGLNLIRGDNGQGKTNLAEAIYFLSGFGSHRTYKNQPLIKSGEQKAEISAKIQSKYGTRNVYIGISCNSNNILKVDGKPSKLRDLVSVFSCVIFSPEDIDLVKGDPGHRRKYLDDIICRARPMMLDIYSAYDRTLKQRNSLLKSFRKSSCKSDLLDIWTQKLVELGLEIVNARKRLLKILNPKISEFYSKLAGVSSTAELFCQSSDCLIDTFDLLRDREIEEGVTLAGPHRDNVDILLNSCPARSQSSQGESWTLALSMKLSLIELMRETKRLYDPDPVVILDDVFAHLDSYRKQKLAQEVFSYEQTIVTTTDNSDNYRTSQTLVVEEGKVFSENKKG.

33 to 40 (GDNGQGKT) is an ATP binding site.

Belongs to the RecF family.

It localises to the cytoplasm. Its function is as follows. The RecF protein is involved in DNA metabolism; it is required for DNA replication and normal SOS inducibility. RecF binds preferentially to single-stranded, linear DNA. It also seems to bind ATP. In Tropheryma whipplei (strain TW08/27) (Whipple's bacillus), this protein is DNA replication and repair protein RecF.